Reading from the N-terminus, the 643-residue chain is Chromosomal replication initiator protein DnaA (643 aa).

Residues 1–97 form a domain I, interacts with DnaA modulators region; it reads MADVPADLAA…VDDSAGEPPP (97 aa). Positions 87–303 are disordered; that stretch reads TVDDSAGEPP…ASGPGEPTAR (217 aa). A domain II region spans residues 97 to 302; it reads PAAPPAQQTP…PASGPGEPTA (206 aa). The span at 195–209 shows a compositional bias: polar residues; it reads SPSSQDAYGSPSQDY. Residues 222-269 show a composition bias toward basic and acidic residues; the sequence is QRGDYDTPRAEYEPARPDYDSARPDYESARPEYDQRDPVRRELPEPPA. Over residues 291–300 the composition is skewed to low complexity; the sequence is PAPASGPGEP. A domain III, AAA+ region region spans residues 303–519; it reads RLNPKYLFDT…GALIRVTAFA (217 aa). Gly-347, Gly-349, Lys-350, and Thr-351 together coordinate ATP. The interval 520-643 is domain IV, binds dsDNA; it reads SLNRQPVDLG…TELTNRIKNG (124 aa).

Belongs to the DnaA family. Oligomerizes as a right-handed, spiral filament on DNA at oriC.

The protein resides in the cytoplasm. Functionally, plays an essential role in the initiation and regulation of chromosomal replication. ATP-DnaA binds to the origin of replication (oriC) to initiate formation of the DNA replication initiation complex once per cell cycle. Binds the DnaA box (a 9 base pair repeat at the origin) and separates the double-stranded (ds)DNA. Forms a right-handed helical filament on oriC DNA; dsDNA binds to the exterior of the filament while single-stranded (ss)DNA is stabiized in the filament's interior. The ATP-DnaA-oriC complex binds and stabilizes one strand of the AT-rich DNA unwinding element (DUE), permitting loading of DNA polymerase. After initiation quickly degrades to an ADP-DnaA complex that is not apt for DNA replication. Binds acidic phospholipids. The chain is Chromosomal replication initiator protein DnaA from Streptomyces reticuli.